Here is a 490-residue protein sequence, read N- to C-terminus: MRSNPTTSGSEVSAVEKKNLGRIVKIIGPVLDVAFPPGKMPNIYNALVVQGRDNEQTNVTCEVQQLLGNNRVRAVAMSDTDGLMRGMAVINTGAPISVPVGGSTLGRIFNVLGQPVDNLGPVDTNTTSPIHRSAPAFIQLDTKLSIFETGIKVVDLLAPYRRGGKIGLFGGAGVGKTVLIMELINNIAKAHGGVSVFGGVGERTREGNDLYMEMKESGVINEENIAESKVALVYGQMNEPPGARMRVGLTALTMAEYFRDVNEQDVLLFIDNIFRFVQAGSEVSALLGRMPSAVGYQPTLSTEMGTLQERITSTKEGSITSIQAVYVPADDLTDPAPATTFAHLDATTVLSRGLAAKGIYPAVDPLDSTSTMLQPRIVGEEHYETAQRVKQTLQRYKELQDIIAILGLDELSEEDRLTVARARKIERFLSQPFFVAEVFTGSPGKYVGLAETIRGFQLILSGELDVLPEQAFYLVGNIDEATAKAMNLKT.

170–177 is a binding site for ATP; that stretch reads GGAGVGKT.

Belongs to the ATPase alpha/beta chains family. As to quaternary structure, F-type ATPases have 2 components, CF(1) - the catalytic core - and CF(0) - the membrane proton channel. CF(1) has five subunits: alpha(3), beta(3), gamma(1), delta(1), epsilon(1). CF(0) has four main subunits: a(1), b(1), b'(1) and c(9-12).

It is found in the plastid. The protein localises to the chloroplast thylakoid membrane. The catalysed reaction is ATP + H2O + 4 H(+)(in) = ADP + phosphate + 5 H(+)(out). Produces ATP from ADP in the presence of a proton gradient across the membrane. The catalytic sites are hosted primarily by the beta subunits. The chain is ATP synthase subunit beta, chloroplastic from Convolvulus arvensis (Field bindweed).